A 473-amino-acid chain; its full sequence is Bifunctional protein HldE (473 aa).

Residues 1 to 318 (MKLSMPRFDQ…RAVQREEGSE (318 aa)) are ribokinase. An ATP-binding site is contributed by 194 to 197 (NLGE). Residue aspartate 263 is part of the active site. The cytidylyltransferase stretch occupies residues 343–473 (FTNGCFDILH…TAIVEKIRKA (131 aa)).

This sequence in the N-terminal section; belongs to the carbohydrate kinase PfkB family. The protein in the C-terminal section; belongs to the cytidylyltransferase family. Homodimer.

The catalysed reaction is D-glycero-beta-D-manno-heptose 7-phosphate + ATP = D-glycero-beta-D-manno-heptose 1,7-bisphosphate + ADP + H(+). It catalyses the reaction D-glycero-beta-D-manno-heptose 1-phosphate + ATP + H(+) = ADP-D-glycero-beta-D-manno-heptose + diphosphate. It participates in nucleotide-sugar biosynthesis; ADP-L-glycero-beta-D-manno-heptose biosynthesis; ADP-L-glycero-beta-D-manno-heptose from D-glycero-beta-D-manno-heptose 7-phosphate: step 1/4. It functions in the pathway nucleotide-sugar biosynthesis; ADP-L-glycero-beta-D-manno-heptose biosynthesis; ADP-L-glycero-beta-D-manno-heptose from D-glycero-beta-D-manno-heptose 7-phosphate: step 3/4. Functionally, catalyzes the phosphorylation of D-glycero-D-manno-heptose 7-phosphate at the C-1 position to selectively form D-glycero-beta-D-manno-heptose-1,7-bisphosphate. In terms of biological role, catalyzes the ADP transfer from ATP to D-glycero-beta-D-manno-heptose 1-phosphate, yielding ADP-D-glycero-beta-D-manno-heptose. This Stutzerimonas stutzeri (strain A1501) (Pseudomonas stutzeri) protein is Bifunctional protein HldE.